We begin with the raw amino-acid sequence, 212 residues long: Maleylpyruvate isomerase (212 aa).

Positions 1 to 80 (MKLYNFWRSG…WLEEQYPTPA (80 aa)) constitute a GST N-terminal domain. Residues 9-11 (SGT), H38, V52, 64-65 (QS), 102-104 (DIH), 108-110 (NRR), and R176 contribute to the glutathione site. Positions 85–212 (DADGRQRVRA…AAPAAQPDSA (128 aa)) constitute a GST C-terminal domain.

It belongs to the GST superfamily. Zeta family. In terms of assembly, homodimer. Requires glutathione as cofactor.

The enzyme catalyses 3-maleylpyruvate = 3-fumarylpyruvate. The protein operates within aromatic compound metabolism; naphthalene degradation. Functionally, catalyzes the GSH-dependent isomerization of maleylpyruvate to fumarylpyruvate which is subsequently processed by NagK to form pyruvate and fumarate. In Ralstonia sp, this protein is Maleylpyruvate isomerase.